A 734-amino-acid polypeptide reads, in one-letter code: Polyphosphate kinase (734 aa).

Asn67 contributes to the ATP binding site. Mg(2+) contacts are provided by Arg392 and Arg422. The PLD phosphodiesterase domain maps to 447 to 481; sequence THLKTHSKIALVVKRINNELTSFVHLGTGNYNDKT. Residue His452 is the Phosphohistidine intermediate of the active site. ATP-binding residues include Tyr485, Arg581, and His609. Positions 705 to 734 are disordered; it reads KKQSVQPSGQPVHSRRGGSWMRKLKNTFKR.

This sequence belongs to the polyphosphate kinase 1 (PPK1) family. Mg(2+) is required as a cofactor. In terms of processing, an intermediate of this reaction is the autophosphorylated ppk in which a phosphate is covalently linked to a histidine residue through a N-P bond.

It catalyses the reaction [phosphate](n) + ATP = [phosphate](n+1) + ADP. Catalyzes the reversible transfer of the terminal phosphate of ATP to form a long-chain polyphosphate (polyP). The chain is Polyphosphate kinase from Staphylococcus epidermidis (strain ATCC 12228 / FDA PCI 1200).